The sequence spans 608 residues: DNA mismatch repair protein MutL (608 aa).

The tract at residues 363–397 is disordered; sequence ASLAMARKPDPPRFHETARPQPDPRHTPGTESVSV. A compositionally biased stretch (basic and acidic residues) spans 369–390; sequence RKPDPPRFHETARPQPDPRHTP.

The protein belongs to the DNA mismatch repair MutL/HexB family.

Functionally, this protein is involved in the repair of mismatches in DNA. It is required for dam-dependent methyl-directed DNA mismatch repair. May act as a 'molecular matchmaker', a protein that promotes the formation of a stable complex between two or more DNA-binding proteins in an ATP-dependent manner without itself being part of a final effector complex. This chain is DNA mismatch repair protein MutL, found in Pelobacter propionicus (strain DSM 2379 / NBRC 103807 / OttBd1).